Reading from the N-terminus, the 131-residue chain is MDVTRLLLATLVGFLCFFTVHSHLALEETLGDDRSLRSNSSMNSLDFSSVSIVALNKKSKKISRKEAEKRKRSSKKKASMKKVARPPPPSPCVATRDSCKPPAPACCDPCASCQCRFFGSACTCRVLNPNC.

An N-terminal signal peptide occupies residues 1–22 (MDVTRLLLATLVGFLCFFTVHS). Asparagine 39 carries N-linked (GlcNAc...) asparagine glycosylation. Positions 58 to 100 (KSKKISRKEAEKRKRSSKKKASMKKVARPPPPSPCVATRDSCK) are disordered. A compositionally biased stretch (basic residues) spans 70 to 84 (RKRSSKKKASMKKVA). Intrachain disulfides connect cysteine 92-cysteine 107, cysteine 99-cysteine 113, cysteine 106-cysteine 124, cysteine 110-cysteine 131, and cysteine 115-cysteine 122. One can recognise an Agouti domain in the interval 92 to 131 (CVATRDSCKPPAPACCDPCASCQCRFFGSACTCRVLNPNC).

In terms of tissue distribution, epithelial cells of the hair follicles and the epidermis.

It localises to the secreted. Involved in the regulation of melanogenesis. The binding of ASP to MC1R precludes alpha-MSH initiated signaling and thus blocks production of cAMP, leading to a down-regulation of eumelanogenesis (brown/black pigment) and thus increasing synthesis of pheomelanin (yellow/red pigment). Causes hair follicle melanocytes to synthesize phaeomelanin instead of black or brown pigment eumelanin and produces hairs with a subapical yellow band on an otherwise black or brown background when expressed during the mid-portion of hair growth. This Mus musculus (Mouse) protein is Agouti-signaling protein (Asip).